The primary structure comprises 644 residues: Exoribonuclease 2 (644 aa).

The region spanning 189 to 516 is the RNB domain; that stretch reads REDLTALNFV…NHRLLKAMIT (328 aa). In terms of domain architecture, S1 motif spans 561-643; the sequence is DTRFTAEIID…ETRNVIARPV (83 aa).

This sequence belongs to the RNR ribonuclease family. RNase II subfamily.

The protein resides in the cytoplasm. It carries out the reaction Exonucleolytic cleavage in the 3'- to 5'-direction to yield nucleoside 5'-phosphates.. Its function is as follows. Involved in mRNA degradation. Hydrolyzes single-stranded polyribonucleotides processively in the 3' to 5' direction. The polypeptide is Exoribonuclease 2 (Yersinia pseudotuberculosis serotype IB (strain PB1/+)).